The following is a 233-amino-acid chain: Antilisterial bacteriocin subtilosin biosynthesis protein AlbG (233 aa).

6 helical membrane passes run F7 to V27, G46 to V66, T116 to V136, T145 to M165, G176 to F198, and L203 to Y220.

Its subcellular location is the cell membrane. Involved in the production of the bacteriocin subtilosin. The chain is Antilisterial bacteriocin subtilosin biosynthesis protein AlbG (albG) from Bacillus subtilis (strain 168).